We begin with the raw amino-acid sequence, 172 residues long: Ribosome maturation factor RimM (172 aa).

The PRC barrel domain maps to 95 to 168 (AEGEFYYHQI…RVDVEIMEGL (74 aa)).

This sequence belongs to the RimM family. Binds ribosomal protein uS19.

It is found in the cytoplasm. Functionally, an accessory protein needed during the final step in the assembly of 30S ribosomal subunit, possibly for assembly of the head region. Essential for efficient processing of 16S rRNA. May be needed both before and after RbfA during the maturation of 16S rRNA. It has affinity for free ribosomal 30S subunits but not for 70S ribosomes. The chain is Ribosome maturation factor RimM from Streptococcus equi subsp. equi (strain 4047).